Here is an 80-residue protein sequence, read N- to C-terminus: MISPQDLEGMSFEQALARLEQIVGELESGKAELERSIEIYEDGAALKAHCEKKLEAARLKVEKIVLGQGGAVSAEAAEFN.

It belongs to the XseB family. As to quaternary structure, heterooligomer composed of large and small subunits.

The protein localises to the cytoplasm. It catalyses the reaction Exonucleolytic cleavage in either 5'- to 3'- or 3'- to 5'-direction to yield nucleoside 5'-phosphates.. Functionally, bidirectionally degrades single-stranded DNA into large acid-insoluble oligonucleotides, which are then degraded further into small acid-soluble oligonucleotides. This is Exodeoxyribonuclease 7 small subunit from Caulobacter sp. (strain K31).